The following is a 330-amino-acid chain: Aspartate--ammonia ligase (330 aa).

This sequence belongs to the class-II aminoacyl-tRNA synthetase family. AsnA subfamily.

It is found in the cytoplasm. The enzyme catalyses L-aspartate + NH4(+) + ATP = L-asparagine + AMP + diphosphate + H(+). It participates in amino-acid biosynthesis; L-asparagine biosynthesis; L-asparagine from L-aspartate (ammonia route): step 1/1. The polypeptide is Aspartate--ammonia ligase (Streptococcus agalactiae serotype III (strain NEM316)).